The sequence spans 164 residues: MMKTVKHLLCCAIAASALISTGVHAASWKDALSSAASELGNQNSTTQEGGWSLASLTNLLSSGNQALSADNMNNAAGILQYCAKQKLASVTDAENIKNQVLEKLGLNSEEQKEDTNYLDGIQGLLKTKDGQQLNLDNIGTTPLAEKVKTKACDLVLKQGLNFIS.

A signal peptide spans 1–25 (MMKTVKHLLCCAIAASALISTGVHA).

This is an uncharacterized protein from Escherichia coli (strain K12).